Here is an 868-residue protein sequence, read N- to C-terminus: Translation initiation factor IF-2 (868 aa).

A disordered region spans residues 201 to 269; the sequence is KEEVKPEKVS…GTEKSDKYRE (69 aa). Basic residues predominate over residues 249 to 260; sequence RGGRSKFKKKKG. One can recognise a tr-type G domain in the interval 368 to 537; it reads GRAPVVTIMG…LLQSEVLELK (170 aa). The interval 377-384 is G1; the sequence is GHVDHGKT. 377 to 384 provides a ligand contact to GTP; it reads GHVDHGKT. The G2 stretch occupies residues 402–406; the sequence is GITQH. The segment at 423–426 is G3; that stretch reads DTPG. Residues 423–427 and 477–480 each bind GTP; these read DTPGH and NKMD. Residues 477 to 480 form a G4 region; that stretch reads NKMD. The tract at residues 513–515 is G5; the sequence is SAK.

Belongs to the TRAFAC class translation factor GTPase superfamily. Classic translation factor GTPase family. IF-2 subfamily.

The protein localises to the cytoplasm. Its function is as follows. One of the essential components for the initiation of protein synthesis. Protects formylmethionyl-tRNA from spontaneous hydrolysis and promotes its binding to the 30S ribosomal subunits. Also involved in the hydrolysis of GTP during the formation of the 70S ribosomal complex. This chain is Translation initiation factor IF-2, found in Legionella pneumophila (strain Corby).